Reading from the N-terminus, the 317-residue chain is tRNA-cytidine(32) 2-sulfurtransferase (317 aa).

The PP-loop motif signature appears at 63-68 (SGGKDS). [4Fe-4S] cluster-binding residues include C138, C141, and C229.

The protein belongs to the TtcA family. Homodimer. Mg(2+) serves as cofactor. [4Fe-4S] cluster is required as a cofactor.

The protein resides in the cytoplasm. It carries out the reaction cytidine(32) in tRNA + S-sulfanyl-L-cysteinyl-[cysteine desulfurase] + AH2 + ATP = 2-thiocytidine(32) in tRNA + L-cysteinyl-[cysteine desulfurase] + A + AMP + diphosphate + H(+). It participates in tRNA modification. Its function is as follows. Catalyzes the ATP-dependent 2-thiolation of cytidine in position 32 of tRNA, to form 2-thiocytidine (s(2)C32). The sulfur atoms are provided by the cysteine/cysteine desulfurase (IscS) system. This is tRNA-cytidine(32) 2-sulfurtransferase from Janthinobacterium sp. (strain Marseille) (Minibacterium massiliensis).